Here is a 364-residue protein sequence, read N- to C-terminus: Coproporphyrin III ferrochelatase (364 aa).

Residues arginine 29 and tyrosine 118 each contribute to the Fe-coproporphyrin III site. Residues histidine 169 and glutamate 250 each contribute to the Fe(2+) site.

It belongs to the ferrochelatase family.

Its subcellular location is the cytoplasm. It catalyses the reaction Fe-coproporphyrin III + 2 H(+) = coproporphyrin III + Fe(2+). The protein operates within porphyrin-containing compound metabolism; protoheme biosynthesis. In terms of biological role, involved in coproporphyrin-dependent heme b biosynthesis. Catalyzes the insertion of ferrous iron into coproporphyrin III to form Fe-coproporphyrin III. The chain is Coproporphyrin III ferrochelatase from Streptococcus pneumoniae (strain Taiwan19F-14).